Reading from the N-terminus, the 60-residue chain is UPF0434 protein Pnap_1922 (60 aa).

It belongs to the UPF0434 family.

The sequence is that of UPF0434 protein Pnap_1922 from Polaromonas naphthalenivorans (strain CJ2).